A 443-amino-acid chain; its full sequence is Histidine--tRNA ligase (443 aa).

The segment covering 1–20 (MTESEKKQQKPQKAKAEKFK) has biased composition (basic and acidic residues). The segment at 1–21 (MTESEKKQQKPQKAKAEKFKA) is disordered.

This sequence belongs to the class-II aminoacyl-tRNA synthetase family. As to quaternary structure, homodimer.

The protein localises to the cytoplasm. The enzyme catalyses tRNA(His) + L-histidine + ATP = L-histidyl-tRNA(His) + AMP + diphosphate + H(+). This is Histidine--tRNA ligase from Corynebacterium jeikeium (strain K411).